A 156-amino-acid chain; its full sequence is Small ribosomal subunit protein uS7 (156 aa).

It belongs to the universal ribosomal protein uS7 family. In terms of assembly, part of the 30S ribosomal subunit. Contacts proteins S9 and S11.

One of the primary rRNA binding proteins, it binds directly to 16S rRNA where it nucleates assembly of the head domain of the 30S subunit. Is located at the subunit interface close to the decoding center, probably blocks exit of the E-site tRNA. This is Small ribosomal subunit protein uS7 from Citrifermentans bemidjiense (strain ATCC BAA-1014 / DSM 16622 / JCM 12645 / Bem) (Geobacter bemidjiensis).